Here is a 253-residue protein sequence, read N- to C-terminus: 3-deoxy-manno-octulosonate cytidylyltransferase (253 aa).

The protein belongs to the KdsB family.

The protein localises to the cytoplasm. It catalyses the reaction 3-deoxy-alpha-D-manno-oct-2-ulosonate + CTP = CMP-3-deoxy-beta-D-manno-octulosonate + diphosphate. It functions in the pathway nucleotide-sugar biosynthesis; CMP-3-deoxy-D-manno-octulosonate biosynthesis; CMP-3-deoxy-D-manno-octulosonate from 3-deoxy-D-manno-octulosonate and CTP: step 1/1. Its pathway is bacterial outer membrane biogenesis; lipopolysaccharide biosynthesis. Activates KDO (a required 8-carbon sugar) for incorporation into bacterial lipopolysaccharide in Gram-negative bacteria. This Neisseria meningitidis serogroup C (strain 053442) protein is 3-deoxy-manno-octulosonate cytidylyltransferase.